A 434-amino-acid polypeptide reads, in one-letter code: Probable zinc metalloprotease PTRG_04772 (434 aa).

The N-linked (GlcNAc...) asparagine glycan is linked to Asn-88. The Zn(2+) site is built by His-111, Asp-131, and Glu-164. N-linked (GlcNAc...) asparagine glycosylation occurs at Asn-179. Asp-191 contributes to the Zn(2+) binding site. N-linked (GlcNAc...) asparagine glycosylation is found at Asn-220, Asn-299, Asn-347, Asn-353, Asn-390, and Asn-395. Positions 340 to 433 constitute a Fibronectin type-III domain; the sequence is SPTNVGINTT…LPFPFGCARN (94 aa).

The protein belongs to the peptidase M28 family. M28B subfamily. Zn(2+) serves as cofactor.

The protein localises to the secreted. The protein is Probable zinc metalloprotease PTRG_04772 of Pyrenophora tritici-repentis (strain Pt-1C-BFP) (Wheat tan spot fungus).